Here is a 114-residue protein sequence, read N- to C-terminus: uncharacterized protein (114 aa).

This is an uncharacterized protein from Methanocaldococcus jannaschii (strain ATCC 43067 / DSM 2661 / JAL-1 / JCM 10045 / NBRC 100440) (Methanococcus jannaschii).